We begin with the raw amino-acid sequence, 206 residues long: Protein GrpE (206 aa).

The disordered stretch occupies residues 1–36 (MTDSNGPKDNNQDQAQAAADPVVSKPYIMPDDPEDG).

The protein belongs to the GrpE family. As to quaternary structure, homodimer.

The protein resides in the cytoplasm. Functionally, participates actively in the response to hyperosmotic and heat shock by preventing the aggregation of stress-denatured proteins, in association with DnaK and GrpE. It is the nucleotide exchange factor for DnaK and may function as a thermosensor. Unfolded proteins bind initially to DnaJ; upon interaction with the DnaJ-bound protein, DnaK hydrolyzes its bound ATP, resulting in the formation of a stable complex. GrpE releases ADP from DnaK; ATP binding to DnaK triggers the release of the substrate protein, thus completing the reaction cycle. Several rounds of ATP-dependent interactions between DnaJ, DnaK and GrpE are required for fully efficient folding. This chain is Protein GrpE, found in Rhodopseudomonas palustris (strain HaA2).